A 215-amino-acid chain; its full sequence is ATP-dependent dethiobiotin synthetase BioD (215 aa).

ATP is bound at residue Asp13–Val18. Residue Thr17 participates in Mg(2+) binding. The active site involves Lys38. Thr42 lines the substrate pocket. Residues Asp50, Glu115–Gly118, and Asn175–His176 contribute to the ATP site. Residues Asp50 and Glu115 each contribute to the Mg(2+) site.

Belongs to the dethiobiotin synthetase family. Homodimer. Mg(2+) is required as a cofactor.

It localises to the cytoplasm. The catalysed reaction is (7R,8S)-7,8-diammoniononanoate + CO2 + ATP = (4R,5S)-dethiobiotin + ADP + phosphate + 3 H(+). It functions in the pathway cofactor biosynthesis; biotin biosynthesis; biotin from 7,8-diaminononanoate: step 1/2. In terms of biological role, catalyzes a mechanistically unusual reaction, the ATP-dependent insertion of CO2 between the N7 and N8 nitrogen atoms of 7,8-diaminopelargonic acid (DAPA, also called 7,8-diammoniononanoate) to form a ureido ring. The polypeptide is ATP-dependent dethiobiotin synthetase BioD (Neisseria meningitidis serogroup B (strain ATCC BAA-335 / MC58)).